The primary structure comprises 171 residues: Large ribosomal subunit protein uL10 (171 aa).

Belongs to the universal ribosomal protein uL10 family. In terms of assembly, part of the ribosomal stalk of the 50S ribosomal subunit. The N-terminus interacts with L11 and the large rRNA to form the base of the stalk. The C-terminus forms an elongated spine to which L12 dimers bind in a sequential fashion forming a multimeric L10(L12)X complex.

In terms of biological role, forms part of the ribosomal stalk, playing a central role in the interaction of the ribosome with GTP-bound translation factors. This chain is Large ribosomal subunit protein uL10, found in Maricaulis maris (strain MCS10) (Caulobacter maris).